The following is a 197-amino-acid chain: MEEKRTAFIERKTTETSIEVDINLDGEGKYDIDTGIGFFDHMLELMSKHGLIDLKVKVIGDLKVDSHHTVEDTGIVIGECINKALGNKKSINRYGTSFVPMDESLCQVSMDISGRAFLVFDGEFTCEKLGDFQTEMVEEFFRALAFNAGITLHARVIYGKNNHHMIEGLFKAFGRALSEAVSKNTRIKGVMSTKGSI.

The protein belongs to the imidazoleglycerol-phosphate dehydratase family.

It localises to the cytoplasm. The catalysed reaction is D-erythro-1-(imidazol-4-yl)glycerol 3-phosphate = 3-(imidazol-4-yl)-2-oxopropyl phosphate + H2O. The protein operates within amino-acid biosynthesis; L-histidine biosynthesis; L-histidine from 5-phospho-alpha-D-ribose 1-diphosphate: step 6/9. The protein is Imidazoleglycerol-phosphate dehydratase of Clostridium acetobutylicum (strain ATCC 824 / DSM 792 / JCM 1419 / IAM 19013 / LMG 5710 / NBRC 13948 / NRRL B-527 / VKM B-1787 / 2291 / W).